A 161-amino-acid polypeptide reads, in one-letter code: S-ribosylhomocysteine lyase (161 aa).

Fe cation contacts are provided by H57, H61, and C127.

It belongs to the LuxS family. In terms of assembly, homodimer. It depends on Fe cation as a cofactor.

The catalysed reaction is S-(5-deoxy-D-ribos-5-yl)-L-homocysteine = (S)-4,5-dihydroxypentane-2,3-dione + L-homocysteine. Functionally, involved in the synthesis of autoinducer 2 (AI-2) which is secreted by bacteria and is used to communicate both the cell density and the metabolic potential of the environment. The regulation of gene expression in response to changes in cell density is called quorum sensing. Catalyzes the transformation of S-ribosylhomocysteine (RHC) to homocysteine (HC) and 4,5-dihydroxy-2,3-pentadione (DPD). The polypeptide is S-ribosylhomocysteine lyase (Streptococcus equi subsp. zooepidemicus (strain H70)).